A 108-amino-acid chain; its full sequence is UPF0060 membrane protein YnfA (108 aa).

Topologically, residues 1-5 are periplasmic; that stretch reads MIKTT. The chain crosses the membrane as a helical span at residues 6–26; the sequence is LLFFATALCEIIGCFLPWLWL. Over 27–30 the chain is Cytoplasmic; the sequence is KRNA. Residues 31–51 traverse the membrane as a helical segment; the sequence is SIWLLLPAGISLALFVWLLTL. Over 52-60 the chain is Periplasmic; that stretch reads HPAASGRVY. The helical transmembrane segment at 61-81 threads the bilayer; sequence AAYGGVYVCTALMWLRVVDGV. Residues 82-84 lie on the Cytoplasmic side of the membrane; the sequence is KLT. A helical transmembrane segment spans residues 85 to 105; that stretch reads LYDWTGALIALCGMLIIVAGW. Residues 106–108 lie on the Periplasmic side of the membrane; the sequence is GRT.

The protein belongs to the UPF0060 family.

The protein localises to the cell inner membrane. This Escherichia coli O139:H28 (strain E24377A / ETEC) protein is UPF0060 membrane protein YnfA.